A 136-amino-acid chain; its full sequence is Nucleoside diphosphate kinase (136 aa).

ATP contacts are provided by K10, F58, R86, T92, R104, and N114. H117 (pros-phosphohistidine intermediate) is an active-site residue.

The protein belongs to the NDK family. Homotetramer. Requires Mg(2+) as cofactor.

The protein localises to the cytoplasm. It carries out the reaction a 2'-deoxyribonucleoside 5'-diphosphate + ATP = a 2'-deoxyribonucleoside 5'-triphosphate + ADP. It catalyses the reaction a ribonucleoside 5'-diphosphate + ATP = a ribonucleoside 5'-triphosphate + ADP. In terms of biological role, major role in the synthesis of nucleoside triphosphates other than ATP. The ATP gamma phosphate is transferred to the NDP beta phosphate via a ping-pong mechanism, using a phosphorylated active-site intermediate. This Mycolicibacterium gilvum (strain PYR-GCK) (Mycobacterium gilvum (strain PYR-GCK)) protein is Nucleoside diphosphate kinase.